Reading from the N-terminus, the 554-residue chain is (E)-beta-caryophyllene synthase (554 aa).

2 residues coordinate Mn(2+): Asp313 and Asp317. The short motif at 313–317 (DDTYD) is the DDXXD motif element. Homodimerization regions lie at residues 319–325 (YGTLDEL) and 391–427 (EAQW…LAVI). Asp457 and Glu465 together coordinate Mn(2+).

The protein belongs to the terpene synthase family. As to quaternary structure, homodimer. It depends on Mn(2+) as a cofactor. The cofactor is Mg(2+). Expressed in peltate glandular trichomes. Present at low levels in flowers, leaves and stems.

The enzyme catalyses (2E,6E)-farnesyl diphosphate = (-)-(E)-beta-caryophyllene + diphosphate. It carries out the reaction (2E,6E)-farnesyl diphosphate = alpha-humulene + diphosphate. It functions in the pathway secondary metabolite biosynthesis; terpenoid biosynthesis. Its function is as follows. Involved in the biosynthesis of phenolic sesquiterpenes natural products. Sesquiterpene synthase converting (2E,6E)-farnesyl diphosphate (FPP) to (E)-beta-caryophyllene and alpha-humulene. This is (E)-beta-caryophyllene synthase from Origanum vulgare (Wild marjoram).